The sequence spans 368 residues: Histidinol-phosphate aminotransferase (368 aa).

Lys215 is subject to N6-(pyridoxal phosphate)lysine.

It belongs to the class-II pyridoxal-phosphate-dependent aminotransferase family. Histidinol-phosphate aminotransferase subfamily. Homodimer. Pyridoxal 5'-phosphate serves as cofactor.

It carries out the reaction L-histidinol phosphate + 2-oxoglutarate = 3-(imidazol-4-yl)-2-oxopropyl phosphate + L-glutamate. It functions in the pathway amino-acid biosynthesis; L-histidine biosynthesis; L-histidine from 5-phospho-alpha-D-ribose 1-diphosphate: step 7/9. This is Histidinol-phosphate aminotransferase from Buchnera aphidicola subsp. Acyrthosiphon pisum (strain 5A).